The sequence spans 355 residues: Chromosomal protein D1 (355 aa).

M1 is subject to N-acetylmethionine. Residues 1–355 (MEEVAVKKRG…NYNDSESVAA (355 aa)) form a disordered region. Positions 7–14 (KKRGRPSK) form a DNA-binding region, a.T hook 1. Residue S30 is modified to Phosphoserine. 2 consecutive DNA-binding regions (a.T hook) follow at residues 34–41 (KKRGRPAK) and 60–67 (KIQNDEDP). A compositionally biased stretch (acidic residues) spans 64 to 77 (DEDPEDEGEEDGDG). S80, S88, and S89 each carry phosphoserine. The a.T hook 4 DNA-binding region spans 94–101 (KGRGRPKS). Residues S107, S109, and S112 each carry the phosphoserine modification. Residue T115 is modified to Phosphothreonine. S118 bears the Phosphoserine mark. A compositionally biased stretch (basic residues) spans 119-130 (AKKRKAGRPKKH). The segment at residues 122 to 129 (RKAGRPKK) is a DNA-binding region (a.T hook 5). 2 positions are modified to phosphoserine; by CK2: S133 and S135. Residues 135–147 (SENEDDQDEDDDG) show a composition bias toward acidic residues. Phosphoserine is present on residues S149, S150, S161, S164, and S170. A DNA-binding region (a.T hook 6) is located at residues 155–162 (RPVGRPSA). The segment at residues 174-181 (RGLGRPKK) is a DNA-binding region (a.T hook 7). S186 carries the post-translational modification Phosphoserine; by CK2. The segment at residues 196–203 (KKRGRPPQ) is a DNA-binding region (a.T hook 8). S208 carries the post-translational modification Phosphoserine. Residues 219–226 (RPRGRPKA) constitute a DNA-binding region (a.T hook 9). The segment covering 237–247 (NDDDQDDENSG) has biased composition (acidic residues). Residues S246, S252, and S253 each carry the phosphoserine modification. 2 consecutive DNA-binding regions (a.T hook) follow at residues 262–269 (KKRGRPSL) and 281–288 (KPRSRPAK). Residues S299 and S307 each carry the phosphoserine modification. Residues 307–318 (SKKESNDEDRAV) are compositionally biased toward basic and acidic residues. Phosphoserine; by CK2 is present on S311. T321 bears the Phosphothreonine mark. A Phosphoserine; by CK2 modification is found at S332. Positions 345–355 (DNYNDSESVAA) are enriched in polar residues.

Its subcellular location is the nucleus. It localises to the chromosome. Its function is as follows. This satellite DNA-associated protein is a double-stranded DNA binding protein specific for tracts of pure at DNA. It may play a role in organizing the higher-order structure of euchromatin as well as heterochromatin. The polypeptide is Chromosomal protein D1 (D1) (Drosophila melanogaster (Fruit fly)).